Here is a 266-residue protein sequence, read N- to C-terminus: Luciferase (266 aa).

The helical transmembrane segment at 22 to 41 (GLAVTCCAVAVASIIAFPYI) threads the bilayer.

This sequence belongs to the fungal luciferase family.

It localises to the membrane. The catalysed reaction is 3-hydroxyhispidin + O2 = (E)-caffeoylpyruvate + hnu + CO2. It catalyses the reaction 3-hydroxyhispidin + O2 = 4-[(E)-2-(3,4-dihydroxyphenyl)ethenyl]-1,7-dihydroxy-2,3,5-trioxabicyclo[2.2.2]oct-7-en-6-one. Luciferase; part of the gene cluster that mediates the fungal bioluminescence cycle. Uses the fungal luciferin 3-hydroxyhispidin as a substrate to produce an endoperoxide as a high-energy intermediate with decomposition that yields oxyluciferin (also known as caffeoylpyruvate) and light emission. The fungal bioluminescence cycle begins with the hispidin synthetase that catalyzes the formation of hispidin which is further hydroxylated by the hispidin-3-hydroxylase, yielding the fungal luciferin 3-hydroxyhispidin. The luciferase then produces an endoperoxide as a high-energy intermediate with decomposition that yields oxyluciferin and light emission. Oxyluciferin can be recycled to caffeic acid by caffeoylpyruvate hydrolase. In Armillaria mellea (Honey mushroom), this protein is Luciferase.